A 262-amino-acid chain; its full sequence is tRNA pseudouridine synthase B (262 aa).

The active-site Nucleophile is the Asp-77.

The protein belongs to the pseudouridine synthase TruB family. Type 1 subfamily.

It catalyses the reaction uridine(55) in tRNA = pseudouridine(55) in tRNA. In terms of biological role, responsible for synthesis of pseudouridine from uracil-55 in the psi GC loop of transfer RNAs. This Protochlamydia amoebophila (strain UWE25) protein is tRNA pseudouridine synthase B.